We begin with the raw amino-acid sequence, 129 residues long: MASRLLRGAGTLAAQALRARGPSGAAAMRSMASGGGVPTDEEQATGLEREIMLAAKKGLDPYNVLAPKGASGTREDPNLVPSISNKRIVGCICEEDNTSVVWFWLHKGEAQRCPRCGAHYKLVPQQLAH.

Residues Met1–Met31 constitute a mitochondrion transit peptide. N6-acetyllysine is present on residues Lys68 and Lys86. Residues Cys91, Cys93, Cys113, and Cys116 each coordinate Zn(2+). Lys121 bears the N6-acetyllysine mark.

Belongs to the cytochrome c oxidase subunit 5B family. As to quaternary structure, component of the cytochrome c oxidase (complex IV, CIV), a multisubunit enzyme composed of 14 subunits. The complex is composed of a catalytic core of 3 subunits MT-CO1, MT-CO2 and MT-CO3, encoded in the mitochondrial DNA, and 11 supernumerary subunits COX4I1 (or COX4I2), COX5A, COX5B, COX6A1 (or COX6A2), COX6B1 (or COX6B2), COX6C, COX7A2 (or COX7A1), COX7B, COX7C, COX8A and NDUFA4, which are encoded in the nuclear genome. The complex exists as a monomer or a dimer and forms supercomplexes (SCs) in the inner mitochondrial membrane with NADH-ubiquinone oxidoreductase (complex I, CI) and ubiquinol-cytochrome c oxidoreductase (cytochrome b-c1 complex, complex III, CIII), resulting in different assemblies (supercomplex SCI(1)III(2)IV(1) and megacomplex MCI(2)III(2)IV(2)).

It is found in the mitochondrion inner membrane. Its pathway is energy metabolism; oxidative phosphorylation. Component of the cytochrome c oxidase, the last enzyme in the mitochondrial electron transport chain which drives oxidative phosphorylation. The respiratory chain contains 3 multisubunit complexes succinate dehydrogenase (complex II, CII), ubiquinol-cytochrome c oxidoreductase (cytochrome b-c1 complex, complex III, CIII) and cytochrome c oxidase (complex IV, CIV), that cooperate to transfer electrons derived from NADH and succinate to molecular oxygen, creating an electrochemical gradient over the inner membrane that drives transmembrane transport and the ATP synthase. Cytochrome c oxidase is the component of the respiratory chain that catalyzes the reduction of oxygen to water. Electrons originating from reduced cytochrome c in the intermembrane space (IMS) are transferred via the dinuclear copper A center (CU(A)) of subunit 2 and heme A of subunit 1 to the active site in subunit 1, a binuclear center (BNC) formed by heme A3 and copper B (CU(B)). The BNC reduces molecular oxygen to 2 water molecules using 4 electrons from cytochrome c in the IMS and 4 protons from the mitochondrial matrix. The protein is Cytochrome c oxidase subunit 5B, mitochondrial (COX5B) of Homo sapiens (Human).